A 305-amino-acid chain; its full sequence is NAD kinase 2 (305 aa).

The active-site Proton acceptor is D78. NAD(+) contacts are provided by residues 78–79 (DG), 152–153 (NE), D182, 193–198 (TAYSLS), and N251.

Belongs to the NAD kinase family. Requires a divalent metal cation as cofactor.

It localises to the cytoplasm. The catalysed reaction is NAD(+) + ATP = ADP + NADP(+) + H(+). Involved in the regulation of the intracellular balance of NAD and NADP, and is a key enzyme in the biosynthesis of NADP. Catalyzes specifically the phosphorylation on 2'-hydroxyl of the adenosine moiety of NAD to yield NADP. Functions as a growth repressor under light-activated heterotrophic growth conditions and light and dark cycle conditions in the presence of glucose. NADP(H)/NAD(H) maintenance by slr0400 probably plays a significant role in modulating glycolysis and the TCA cycle to repress the growth rate and maintain the photosynthetic capacity. This chain is NAD kinase 2, found in Synechocystis sp. (strain ATCC 27184 / PCC 6803 / Kazusa).